The following is an 89-amino-acid chain: Acylphosphatase (89 aa).

The Acylphosphatase-like domain occupies 3 to 89 (RFTARVAGLV…QSDLTDFRRK (87 aa)). Catalysis depends on residues R18 and N36.

This sequence belongs to the acylphosphatase family.

The catalysed reaction is an acyl phosphate + H2O = a carboxylate + phosphate + H(+). The polypeptide is Acylphosphatase (acyP) (Frankia casuarinae (strain DSM 45818 / CECT 9043 / HFP020203 / CcI3)).